A 266-amino-acid chain; its full sequence is Uridylate kinase (266 aa).

ATP is bound at residue lysine 26 to glycine 29. Glycine 67 lines the UMP pocket. ATP contacts are provided by glycine 68 and arginine 72. UMP is bound by residues aspartate 87 and leucine 148–threonine 155. ATP-binding residues include tyrosine 181 and aspartate 184.

The protein belongs to the UMP kinase family. Homohexamer.

The protein localises to the cytoplasm. It carries out the reaction UMP + ATP = UDP + ADP. It participates in pyrimidine metabolism; CTP biosynthesis via de novo pathway; UDP from UMP (UMPK route): step 1/1. Inhibited by UTP. In terms of biological role, catalyzes the reversible phosphorylation of UMP to UDP. This is Uridylate kinase from Acidothermus cellulolyticus (strain ATCC 43068 / DSM 8971 / 11B).